The chain runs to 1655 residues: Protein scribble homolog (1655 aa).

Positions M1–E818 are sufficient for targeting to adherens junction and to inhibit cell proliferation. S37 is modified (phosphoserine). 16 LRR repeats span residues S37–L58, N60–F81, Q83–C104, A106–L127, S129–L150, N152–V174, K175–P197, N198–L219, R221–V243, L244–L265, Q267–C288, N290–T312, K313–C334, A336–T357, E359–N381, and L382–D402. A Phosphothreonine modification is found at T378. Disordered stretches follow at residues P417 to A440, D459 to D606, and L628 to P702. Residues E458 to A474 are a coiled coil. At T475 the chain carries Phosphothreonine. Residues S479–E494 show a composition bias toward basic and acidic residues. Position 504 is a phosphoserine (S504). A compositionally biased stretch (low complexity) spans E537–G555. Composition is skewed to acidic residues over residues G556–Q565 and E660–K694. A coiled-coil region spans residues R656–A701. A Phosphoserine modification is found at S688. The residue at position 689 (T689) is a Phosphothreonine. A phosphoserine mark is found at S708 and S764. An interaction with ARHGEF7 region spans residues I717–R1229. Residues T728 to R815 enclose the PDZ 1 domain. Positions T728 to A1194 are required for interaction with VIM. T826 carries the phosphothreonine modification. Residues P827 to S853 are disordered. Residues R829–G841 show a composition bias toward basic and acidic residues. Phosphoserine is present on residues S835, S853, S875, and S939. 3 consecutive PDZ domains span residues V862 to A950, E1004 to P1093, and E1100 to A1194. An interaction with tick-borne encephalitis virus RNA-directed RNA polymerase NS5 region spans residues K1105–G1117. S1140, S1220, S1223, S1226, S1232, S1276, S1279, S1295, S1298, S1306, and S1309 each carry phosphoserine. Residues I1227–L1242 are compositionally biased toward basic and acidic residues. Positions I1227 to T1246 are disordered. A disordered region spans residues A1277 to E1489. A compositionally biased stretch (pro residues) spans Q1302–D1311. T1342 is modified (phosphothreonine). Phosphoserine is present on S1348. A compositionally biased stretch (basic and acidic residues) spans S1353–V1365. S1378 bears the Phosphoserine mark. Residues L1379–D1419 are a coiled coil. Positions D1383–K1395 are enriched in basic and acidic residues. Positions E1409–E1421 are enriched in low complexity. The segment covering T1422–Q1432 has biased composition (acidic residues). 3 positions are modified to phosphoserine: S1437, S1445, and S1448. The span at A1461 to R1472 shows a compositional bias: basic and acidic residues. S1475, S1486, and S1508 each carry phosphoserine. The disordered stretch occupies residues L1520–S1568. The segment covering Q1524–A1537 has biased composition (basic and acidic residues). Position 1541 is a phosphoserine (S1541). A Phosphothreonine modification is found at T1545. A phosphoserine mark is found at S1547, S1561, and S1591. Residues G1622–S1655 form a disordered region.

The protein belongs to the LAP (LRR and PDZ) protein family. As to quaternary structure, interacts with UBE3A. Interacts with PAK1 and PAK2. Interacts (via PDZ domains) with VANGL2. Interacts (via PDZ domains) with LPP and TRIP6; the interaction is direct. Interacts (via PDZ domains) with TJP2. Interacts (via PDZ domains) with APC; may mediate APC targeting to adherens junctions of epithelial cells. Interacts (via PDZ domains) with TSHR; regulates TSHR trafficking and function. Interacts with ARHGEF7 and GIT1; interacts directly with ARHGEF7. Interacts with CTNNB1. Interacts with MAPK12. Interacts (via PDZ domains 1 and 3) with MCC. Interacts with DLG5. Interacts with STK4/MST1 and LATS1 in the presence of DLG5. Interacts (via PDZ domain 3) with CRTAM (via PDZ-binding motif); the interaction promotes CRTAM and SCRIB polarization in a subset of CD4+ T-cells. Interacts with YES1, when YES1 is in a closed conformation; the interaction facilitates YES1 autophosphorylation. Interacts (via PDZ domains) with VIM; the interaction protects SCRIB from proteasomal degradation and facilitates SCRIB localization to intermediate filaments, the interaction is reduced by cell contact inhibition. In terms of assembly, (Microbial infection) Interacts (via fourth PDZ domain) with tick-borne encephalitis virus RNA-directed RNA polymerase NS5; this interaction targets viral NS5 to the cell membrane periphery and nucleus and prevents STAT1 phosphorylation, and thus, the activation of the JAK-STAT signaling pathway. Interacts with HPV E6. Interacts with influenza A virus protein NS1; the interaction results in the translocation of SCRIB from the cell membrane to perinuclear puncta. Post-translationally, ubiquitinated; targeted for UBE3A-dependent multiubiquitination in the presence of high-risk HPV E6 proteins and degraded. In terms of processing, palmitoylated. Could be depalmitoylated by LYPLA1 and/or LYPLA2. Palmitoylation of SCRIB by ZDHHC7 is required for its localization to cell-cell junctions, function in the establishement of epithelial cell polarity and the regulation of downstream signaling pathways important for epithelial cell differentiation. In terms of tissue distribution, expressed in kidney, skeletal muscles, liver, lung, breast, intestine, placenta and skin mainly in epithelial cells (at protein level).

It is found in the cell membrane. The protein localises to the cell junction. Its subcellular location is the adherens junction. The protein resides in the cell projection. It localises to the lamellipodium. It is found in the cytoplasm. The protein localises to the postsynapse. Its subcellular location is the presynapse. Its function is as follows. Scaffold protein involved in different aspects of polarized cell differentiation regulating epithelial and neuronal morphogenesis and T-cell polarization. Via its interaction with CRTAM, required for the late phase polarization of a subset of CD4+ T-cells, which in turn regulates TCR-mediated proliferation and IFNG and IL22 production. Plays a role in cell directional movement, cell orientation, cell sheet organization and Golgi complex polarization at the cell migration front. Promotes epithelial cell layer barrier function via maintaining cell-cell adhesion. Most probably functions in the establishment of apico-basal cell polarity. May function in cell proliferation regulating progression from G1 to S phase and as a positive regulator of apoptosis for instance during acinar morphogenesis of the mammary epithelium. May regulate cell invasion via MAPK-mediated cell migration and adhesion. May play a role in exocytosis and in the targeting of synaptic vesicles to synapses. Functions as an activator of Rac GTPase activity. The polypeptide is Protein scribble homolog (Homo sapiens (Human)).